Here is a 428-residue protein sequence, read N- to C-terminus: Serine--tRNA ligase (428 aa).

Position 235-237 (235-237 (TAE)) interacts with L-serine. 266 to 268 (RSE) is an ATP binding site. Residue Glu-289 coordinates L-serine. Residue 353–356 (EISS) coordinates ATP. Ser-389 contacts L-serine.

This sequence belongs to the class-II aminoacyl-tRNA synthetase family. Type-1 seryl-tRNA synthetase subfamily. As to quaternary structure, homodimer. The tRNA molecule binds across the dimer.

Its subcellular location is the cytoplasm. It catalyses the reaction tRNA(Ser) + L-serine + ATP = L-seryl-tRNA(Ser) + AMP + diphosphate + H(+). The catalysed reaction is tRNA(Sec) + L-serine + ATP = L-seryl-tRNA(Sec) + AMP + diphosphate + H(+). It functions in the pathway aminoacyl-tRNA biosynthesis; selenocysteinyl-tRNA(Sec) biosynthesis; L-seryl-tRNA(Sec) from L-serine and tRNA(Sec): step 1/1. Functionally, catalyzes the attachment of serine to tRNA(Ser). Is also able to aminoacylate tRNA(Sec) with serine, to form the misacylated tRNA L-seryl-tRNA(Sec), which will be further converted into selenocysteinyl-tRNA(Sec). In Psychromonas ingrahamii (strain DSM 17664 / CCUG 51855 / 37), this protein is Serine--tRNA ligase.